Consider the following 179-residue polypeptide: Large ribosomal subunit protein uL6 (179 aa).

Belongs to the universal ribosomal protein uL6 family. As to quaternary structure, part of the 50S ribosomal subunit.

Functionally, this protein binds to the 23S rRNA, and is important in its secondary structure. It is located near the subunit interface in the base of the L7/L12 stalk, and near the tRNA binding site of the peptidyltransferase center. The sequence is that of Large ribosomal subunit protein uL6 from Geotalea uraniireducens (strain Rf4) (Geobacter uraniireducens).